Reading from the N-terminus, the 178-residue chain is Large ribosomal subunit protein uL6 (178 aa).

The protein belongs to the universal ribosomal protein uL6 family. As to quaternary structure, part of the 50S ribosomal subunit.

Its function is as follows. This protein binds to the 23S rRNA, and is important in its secondary structure. It is located near the subunit interface in the base of the L7/L12 stalk, and near the tRNA binding site of the peptidyltransferase center. In Nautilia profundicola (strain ATCC BAA-1463 / DSM 18972 / AmH), this protein is Large ribosomal subunit protein uL6.